Here is a 615-residue protein sequence, read N- to C-terminus: Delta(14)-sterol reductase LBR (615 aa).

Positions 1-62 constitute a Tudor domain; that stretch reads MPSRKFADGE…DIKPLTSFRQ (62 aa). At 1 to 211 the chain is on the nuclear side; it reads MPSRKFADGE…IRAKDLEFGG (211 aa). The tract at residues 52 to 109 is disordered; it reads NDIKPLTSFRQRKGGSTSSSPSRRRGSRSRSRSRSPGRPPKSARRSASASHQADIKEA. The residue at position 55 (K55) is an N6-acetyllysine. Phosphothreonine is present on T58. 2 positions are modified to phosphoserine: S59 and S67. A phosphoserine; by CDK1 mark is found at S71 and S86. Residues 73–86 show a composition bias toward basic residues; it reads SRRRGSRSRSRSRS. A phosphoserine mark is found at S97 and S99. T118 carries the post-translational modification Phosphothreonine. Position 128 is a phosphoserine (S128). T200 carries the phosphothreonine modification. The next 8 membrane-spanning stretches (helical) occupy residues 212-232, 258-278, 299-319, 326-346, 386-406, 447-467, 481-501, and 561-581; these read VPGV…LLLM, VFGV…LPIG, FYAF…GVEF, FLQF…YLYM, FCEL…MLLA, IIHD…VPFI, EVSW…YVIF, and PCGF…MLLV. N6-acetyllysine occurs at positions 594 and 601.

This sequence belongs to the ERG4/ERG24 family. As to quaternary structure, interacts with CBX5. Interacts with DNA. Interaction with DNA is sequence independent with higher affinity for supercoiled and relaxed circular DNA than linear DNA. Interacts with lamin B. Interacts with CLNK. Interacts with TMEM147; promoting LBR localization to the nucleus inner membrane. In terms of processing, phosphorylated by CDK1 in mitosis when the inner nuclear membrane breaks down into vesicles that dissociate from the lamina and the chromatin. It is phosphorylated by different protein kinases in interphase when the membrane is associated with these structures. Phosphorylation of LBR and HP1 proteins may be responsible for some of the alterations in chromatin organization and nuclear structure which occur at various times during the cell cycle. Phosphorylated by SRPK1. In late anaphase LBR is dephosphorylated, probably by PP1 and/or PP2A, allowing reassociation with chromatin. As to expression, expressed in the bone marrow, liver, heart, adrenal gland, lung, placenta and uterus. Expressed in osteoclasts and osteoblast-like cells.

It is found in the nucleus inner membrane. The protein resides in the endoplasmic reticulum membrane. Its subcellular location is the cytoplasm. It localises to the nucleus. The enzyme catalyses 5alpha-cholest-8,14-dien-3beta-ol + NADPH + H(+) = 5alpha-cholest-8-en-3beta-ol + NADP(+). It carries out the reaction 4,4-dimethyl-5alpha-cholesta-8,24-dien-3beta-ol + NADP(+) = 4,4-dimethyl-5alpha-cholesta-8,14,24-trien-3beta-ol + NADPH + H(+). The catalysed reaction is 4,4-dimethyl-8,14-cholestadien-3beta-ol + NADPH + H(+) = 4,4-dimethyl-5alpha-cholest-8-en-3beta-ol + NADP(+). It functions in the pathway steroid biosynthesis; cholesterol biosynthesis. In terms of biological role, catalyzes the reduction of the C14-unsaturated bond of lanosterol, as part of the metabolic pathway leading to cholesterol biosynthesis. Plays a critical role in myeloid cell cholesterol biosynthesis which is essential to both myeloid cell growth and functional maturation. Mediates the activation of NADPH oxidases, perhaps by maintaining critical levels of cholesterol required for membrane lipid raft formation during neutrophil differentiation. Anchors the lamina and the heterochromatin to the inner nuclear membrane. This Homo sapiens (Human) protein is Delta(14)-sterol reductase LBR (LBR).